A 380-amino-acid chain; its full sequence is 12-oxophytodienoate reductase 1 (380 aa).

FMN-binding positions include 35–37 (PLT), A68, and Q110. Residue 182–185 (HGAH) participates in substrate binding. Catalysis depends on Y187, which acts as the Proton donor. Residue R234 participates in FMN binding. R275 serves as a coordination point for substrate. FMN contacts are provided by residues G305 and 326 to 327 (GR).

This sequence belongs to the NADH:flavin oxidoreductase/NADH oxidase family. FMN serves as cofactor.

It catalyses the reaction (1S,2S)-OPC-8 + NADP(+) = (9S,13S,15Z)-12-oxophyto-10,15-dienoate + NADPH + H(+). Its pathway is lipid metabolism; oxylipin biosynthesis. Probably involved in the biosynthesis or metabolism of oxylipin signaling molecules. In vitro, reduces cis(-)-12-oxophytodienoic acid (cis(-)-OPDA) and to cis(-)-OPC-8:0. The polypeptide is 12-oxophytodienoate reductase 1 (Oryza sativa subsp. japonica (Rice)).